The sequence spans 493 residues: Serine/threonine-protein kinase PBL34 (493 aa).

Disordered regions lie at residues 1–42 (MGLD…EEEE) and 84–117 (SKSA…TPVI). G2 is lipidated: N-myristoyl glycine. The span at 12 to 37 (WKSEKPKETENKNHKKKNGDDNKSRN) shows a compositional bias: basic and acidic residues. The segment covering 100 to 114 (SSTTTTSNAESSSST) has biased composition (low complexity). T131 is subject to Phosphothreonine. Residues 142-428 (FRPESLLGEG…VEALKPLPHL (287 aa)) enclose the Protein kinase domain. ATP contacts are provided by residues 148–156 (LGEGGFGCV) and K180. Y225 carries the post-translational modification Phosphotyrosine. Catalysis depends on D275, which acts as the Proton acceptor. S279 is subject to Phosphoserine. T306 is subject to Phosphothreonine. S309 is modified (phosphoserine). Phosphothreonine occurs at positions 310 and 315. The residue at position 323 (Y323) is a Phosphotyrosine. Residues 447-493 (KNGSGRSQGFGSRNGQHQPVFRTLSSPHGSSPYRHQIPSPKPKGATT) form a disordered region. Positions 450–475 (SGRSQGFGSRNGQHQPVFRTLSSPHG) are enriched in polar residues.

Belongs to the protein kinase superfamily. Ser/Thr protein kinase family. As to quaternary structure, interacts with the Xanthomonas campestris effector XopAC/AvrAC. Interacts with SD129. Phosphorylated by SD129 at Thr-306 and Thr-310 in response to the pathogen-associated molecular pattern (PAMP) 3-OH-C10:0, a medium-chain 3-hydroxy fatty acid.

It is found in the cell membrane. The catalysed reaction is L-seryl-[protein] + ATP = O-phospho-L-seryl-[protein] + ADP + H(+). It carries out the reaction L-threonyl-[protein] + ATP = O-phospho-L-threonyl-[protein] + ADP + H(+). Involved in chitin-triggered immune signaling and is required for reactive oxygen species (ROS) production. Acts downstream of SD129 in defense signaling triggered by the pathogen-associated molecular pattern (PAMP) 3-OH-C10:0, a medium-chain 3-hydroxy fatty acid. This is Serine/threonine-protein kinase PBL34 from Arabidopsis thaliana (Mouse-ear cress).